The sequence spans 119 residues: uncharacterized protein (119 aa).

Residues 64-119 (SAPLGLKEVQKKSNEGLNEVQGAADINKQKRPANSQDSSSVEGDIQNFLEKVTGKN) are disordered. The segment covering 95–104 (PANSQDSSSV) has biased composition (polar residues).

This is an uncharacterized protein from Nostoc sp. (strain PCC 7120 / SAG 25.82 / UTEX 2576).